The sequence spans 342 residues: Protein RecA (342 aa).

Position 65–72 (65–72 (GPESSGKT)) interacts with ATP.

It belongs to the RecA family.

The protein localises to the cytoplasm. Its function is as follows. Can catalyze the hydrolysis of ATP in the presence of single-stranded DNA, the ATP-dependent uptake of single-stranded DNA by duplex DNA, and the ATP-dependent hybridization of homologous single-stranded DNAs. It interacts with LexA causing its activation and leading to its autocatalytic cleavage. In Teredinibacter turnerae (strain ATCC 39867 / T7901), this protein is Protein RecA.